The sequence spans 391 residues: MMITKQSYQKFALMRVFVFSLSAFIFNTTEFVPVALLSDIAKSFEMESATVGLMITAYAWVVSLGSLPLMLLSAKIERKRLLLFLFALFILSHILSALAWNFWVLLLSRMGIAFTHSIFWSITASLVIRVAPRNKKQQALGLLALGSSLAMILGLPLGRIIGQMLDWRSTFGVIGGVATLIALLMWKLLPHLPSRNAGTLASVPILMKRPLLMGIYLLVIMVISGHFTTYSYIEPFIIQISQFSPDITTLMLFVFGLAGVAGSFLFSRLYAKNSRKFIAFAMVLVICPQLLLFVFKNLEWVIFLQIFLWGIGITSLTIALQMRVLQLAPDATDVASAIFSGSYNVGIGSGALFGSIVIHQLGLEYIGFVGGALGLLALFWLRFITIKFKKT.

The next 12 helical transmembrane spans lie at Val-16–Leu-36, Val-51–Leu-71, Leu-82–Phe-102, Met-110–Val-130, Gln-138–Gly-158, Thr-170–Pro-190, Pro-210–Tyr-230, Ile-247–Ser-267, Phe-277–Asn-297, Trp-300–Leu-320, Ile-338–Ile-358, and Leu-361–Leu-381.

Belongs to the major facilitator superfamily. SotB (TC 2.A.1.2) family.

Its subcellular location is the cell inner membrane. Involved in the efflux of sugars. The physiological role may be the reduction of the intracellular concentration of toxic sugars or sugar metabolites. The chain is Probable sugar efflux transporter from Helicobacter pylori (strain HPAG1).